We begin with the raw amino-acid sequence, 449 residues long: Required for meiotic nuclear division protein 1 homolog (449 aa).

The transit peptide at 1 to 12 (MPATLLRAVARS) directs the protein to the mitochondrion.

This sequence belongs to the RMD1/sif2 family. In terms of assembly, homooligomer.

It localises to the mitochondrion. Required for mitochondrial translation, possibly by coordinating the assembly or maintenance of the mitochondrial ribosome. The chain is Required for meiotic nuclear division protein 1 homolog (RMND1) from Homo sapiens (Human).